We begin with the raw amino-acid sequence, 448 residues long: ATP-dependent protease ATPase subunit HslU (448 aa).

ATP is bound by residues V21, 63–68, D260, E326, and R398; that span reads GVGKTE.

The protein belongs to the ClpX chaperone family. HslU subfamily. A double ring-shaped homohexamer of HslV is capped on each side by a ring-shaped HslU homohexamer. The assembly of the HslU/HslV complex is dependent on binding of ATP.

It is found in the cytoplasm. In terms of biological role, ATPase subunit of a proteasome-like degradation complex; this subunit has chaperone activity. The binding of ATP and its subsequent hydrolysis by HslU are essential for unfolding of protein substrates subsequently hydrolyzed by HslV. HslU recognizes the N-terminal part of its protein substrates and unfolds these before they are guided to HslV for hydrolysis. The polypeptide is ATP-dependent protease ATPase subunit HslU (Sulfurihydrogenibium sp. (strain YO3AOP1)).